The chain runs to 190 residues: UPF0725 protein At2g20625 (190 aa).

This sequence belongs to the UPF0725 (EMB2204) family.

This is UPF0725 protein At2g20625 from Arabidopsis thaliana (Mouse-ear cress).